The primary structure comprises 130 residues: Protein NrdI (130 aa).

The protein belongs to the NrdI family.

Probably involved in ribonucleotide reductase function. This is Protein NrdI from Bacillus velezensis (strain DSM 23117 / BGSC 10A6 / LMG 26770 / FZB42) (Bacillus amyloliquefaciens subsp. plantarum).